The following is a 638-amino-acid chain: Plasma kallikrein (638 aa).

Positions 1–19 (MILFKQATYFISLFATVSC) are cleaved as a signal peptide. Apple domains lie at 21-104 (CLTQ…LKQC), 111-194 (CHRD…LKPC), 201-284 (CHMN…LLTC), and 292-375 (CHSK…LRLC). 18 disulfides stabilise this stretch: C21/C104, C47/C77, C51/C57, C111/C194, C137/C166, C141/C147, C201/C284, C227/C256, C231/C237, C292/C375, C318/C347, C322/C328, C340/C345, C383/C503, C419/C435, C517/C584, C548/C563, and C574/C602. N127 is a glycosylation site (N-linked (GlcNAc...) asparagine). N-linked (GlcNAc...) asparagine glycosylation is present at N308. Residues 391-626 (IVGGTNSSWG…YMDWILEKTQ (236 aa)) form the Peptidase S1 domain. The N-linked (GlcNAc...) asparagine glycan is linked to N396. Catalysis depends on H434, which acts as the Charge relay system. A glycan (N-linked (GlcNAc...) asparagine) is linked at N453. D483 (charge relay system) is an active-site residue. N-linked (GlcNAc...) asparagine glycosylation occurs at N494. S578 serves as the catalytic Charge relay system.

Belongs to the peptidase S1 family. Plasma kallikrein subfamily. As to quaternary structure, forms a heterodimer with SERPINA5. The zymogen is activated by factor XIIa, which cleaves the molecule into a light chain, which contains the active site, and a heavy chain, which associates with HMW kininogen. These chains are linked by one or more disulfide bonds. Interacts with iripin-3, a serine protease inhibitor from Ixodes ricinus saliva. Interacts with iripin-1, a serine protease inhibitor from Ixodes ricinus saliva. As to expression, found in plasma (at protein level).

The protein resides in the secreted. It catalyses the reaction Cleaves selectively Arg-|-Xaa and Lys-|-Xaa bonds, including Lys-|-Arg and Arg-|-Ser bonds in (human) kininogen to release bradykinin.. Its activity is regulated as follows. Inhibited by SERPINA5. Participates in the surface-dependent activation of blood coagulation. Activates, in a reciprocal reaction, coagulation factor XII/F12 after binding to negatively charged surfaces. Releases bradykinin from HMW kininogen and may also play a role in the renin-angiotensin system by converting prorenin into renin. In Homo sapiens (Human), this protein is Plasma kallikrein (KLKB1).